The primary structure comprises 572 residues: Delta-1-pyrroline-5-carboxylate dehydrogenase, mitochondrial (572 aa).

300–305 serves as a coordination point for NAD(+); that stretch reads GQISTR. Glu-320 acts as the Proton acceptor in catalysis. Cys-354 functions as the Nucleophile in the catalytic mechanism.

The protein belongs to the aldehyde dehydrogenase family.

The protein localises to the mitochondrion matrix. It carries out the reaction L-glutamate 5-semialdehyde + NAD(+) + H2O = L-glutamate + NADH + 2 H(+). The protein operates within amino-acid degradation; L-proline degradation into L-glutamate; L-glutamate from L-proline: step 2/2. This is Delta-1-pyrroline-5-carboxylate dehydrogenase, mitochondrial (prnC) from Emericella nidulans (strain FGSC A4 / ATCC 38163 / CBS 112.46 / NRRL 194 / M139) (Aspergillus nidulans).